Consider the following 383-residue polypeptide: Transposase InsI for insertion sequence element IS30A (383 aa).

The 167-residue stretch at 213–379 (VNGTPIHERS…TPKEIIERGV (167 aa)) folds into the Integrase catalytic domain.

Belongs to the transposase IS30 family.

In terms of biological role, required for the transposition of the insertion element. This chain is Transposase InsI for insertion sequence element IS30A (insI1), found in Escherichia coli (strain K12).